The chain runs to 382 residues: Sphingosine kinase 1 (382 aa).

A DAGKc domain is found at 12-159; sequence PRPCRVLVLL…MNLLSLHTAS (148 aa). ATP contacts are provided by residues 22–24 and 54–58; these read NPQ and TERKN. Substrate is bound at residue 79-82; that stretch reads SGDG. Asp81 functions as the Proton donor/acceptor in the catalytic mechanism. ATP contacts are provided by residues Glu86 and 111 to 113; that span reads GSG. Short sequence motifs (nuclear export signal) lie at residues 147 to 155 and 161 to 169; these read LSPMNLLSL and LRLYSVLSL. Asp178 contributes to the substrate binding site. Arg185 and Arg191 together coordinate ATP. Residue Thr193 is modified to Phosphothreonine. Ser225 is modified (phosphoserine). 340–342 provides a ligand contact to ATP; it reads DGE.

Interacts with ACY1. Binds to calmodulin. Interacts with SPHKAP. Interacts with CIB1, the interaction occurs in a calcium-dependent manner. Interacts with TRAF2. Interacts with EEF1A1; the interaction enhances SPHK1 kinase activity. Mg(2+) serves as cofactor. Widely expressed. Expressed in brain (at protein level). Detected in neurons.

It localises to the cytoplasm. The protein localises to the endosome membrane. Its subcellular location is the nucleus. It is found in the cell membrane. The protein resides in the synapse. The enzyme catalyses a sphingoid base + ATP = a sphingoid 1-phosphate + ADP + H(+). The catalysed reaction is L-seryl-[protein] + acetyl-CoA = O-acetyl-L-seryl-[protein] + CoA. It carries out the reaction sphinganine + ATP = sphinganine 1-phosphate + ADP + H(+). It catalyses the reaction sphing-4-enine + ATP = sphing-4-enine 1-phosphate + ADP + H(+). The enzyme catalyses 1-O-hexadecyl-2-amino-sn-glycerol + ATP = 1-O-hexadecyl-2-desoxy-2-amino-sn-glycero-3-phosphate + ADP + H(+). With respect to regulation, acetyltransferase activity increases in presence of the kinase substrate, sphingosine. In Purkinje cells, kinase activity on sphingosine increases in presence of VEGFA. In neurons, kinase activity increases during the first 24h in presence of Amyloid-beta protein 42 to decrease after 96h. Its function is as follows. Catalyzes the phosphorylation of sphingosine to form sphingosine 1-phosphate (SPP), a lipid mediator with both intra- and extracellular functions. Also acts on D-erythro-sphingosine and to a lesser extent sphinganine, but not other lipids, such as D,L-threo-dihydrosphingosine, N,N-dimethylsphingosine, diacylglycerol, ceramide, or phosphatidylinositol. In contrast to proapoptotic SPHK2, has a negative effect on intracellular ceramide levels, enhances cell growth and inhibits apoptosis. Involved in the regulation of inflammatory response and neuroinflammation. Via the product sphingosine 1-phosphate, stimulates TRAF2 E3 ubiquitin ligase activity, and promotes activation of NF-kappa-B in response to TNF signaling. In response to TNF and in parallel to NF-kappa-B activation, negatively regulates RANTES induction through p38 MAPK signaling pathway. Involved in endocytic membrane trafficking induced by sphingosine, recruited to dilate endosomes, also plays a role on later stages of endosomal maturation and membrane fusion independently of its kinase activity. In Purkinje cells, seems to be also involved in the regulation of autophagosome-lysosome fusion upon VEGFA. In terms of biological role, has serine acetyltransferase activity on PTGS2/COX2 in an acetyl-CoA dependent manner. The acetyltransferase activity increases in presence of the kinase substrate, sphingosine. During neuroinflammation, through PTGS2 acetylation, promotes neuronal secretion of specialized preresolving mediators (SPMs), especially 15-R-lipoxin A4, which results in an increase of phagocytic microglia. The protein is Sphingosine kinase 1 of Mus musculus (Mouse).